Here is a 693-residue protein sequence, read N- to C-terminus: Homeobox protein caupolican (693 aa).

Disordered stretches follow at residues 20 to 104, 288 to 331, 387 to 453, 480 to 538, 561 to 627, and 648 to 693; these read TANT…PSRG, NKMT…PGNQ, AQSH…DCGI, YLGQ…PLSM, MHLP…SMHS, and YGHG…RSGS. Positions 41-59 are enriched in low complexity; the sequence is ASLSPSGGSTATGLTAGPL. Residues 226-288 constitute a DNA-binding region (homeobox; TALE-type); the sequence is LAARRKNATR…NARRRLKKEN (63 aa). Composition is skewed to basic and acidic residues over residues 288 to 298 and 308 to 317; these read NKMTWEPKNKT and DDEKEKDAGD. Composition is skewed to low complexity over residues 397 to 419 and 493 to 515; these read HPQQMQHHQQQQQQQQNQQQLQH and QQLPHQPLQQHQQQQLQQLQQQQ. The span at 516–527 shows a compositional bias: basic residues; sequence QHHHHPHHHHPH. The segment covering 609 to 627 has biased composition (low complexity); sequence SSGGSSSSSGSSHSSSMHS. The span at 651–675 shows a compositional bias: basic residues; that stretch reads GHSHGHGHGHGHGLGHGHGLGHGHG.

The protein belongs to the TALE/IRO homeobox family.

The protein localises to the nucleus. Its function is as follows. Controls proneural and vein forming genes. Positive transcriptional controller of ac-sc (achaete-scute). May act as an activator that interacts with the transcriptional complex assembled on the ac and sc promoters and participates in transcription initiation. The sequence is that of Homeobox protein caupolican (caup) from Drosophila melanogaster (Fruit fly).